The chain runs to 182 residues: Plasmolipin (182 aa).

The interval 1–20 (MAEFPSKVNTRTSSPAQGGG) is disordered. The Cytoplasmic segment spans residues 1–35 (MAEFPSKVNTRTSSPAQGGGAVVSTLSPDLGFVRS). Residues 7-16 (KVNTRTSSPA) are compositionally biased toward polar residues. Residues 32 to 166 (FVRSSLGALM…SAFLSFQAWR (135 aa)) enclose the MARVEL domain. A helical membrane pass occupies residues 36–56 (SLGALMLLQLVLGLLVWALIA). Over 57 to 68 (DTPYHLYPSYGW) the chain is Extracellular. The helical transmembrane segment at 69–89 (VMFVAVFLWLVTIIFFVLYLF) threads the bilayer. At 90–99 (QLHMKLYMVP) the chain is on the cytoplasmic side. A helical transmembrane segment spans residues 100–120 (WPLVLMVFNVGATVLYITAFI). Over 121 to 141 (TCSASVELTSLKGSQPYNQRA) the chain is Extracellular. Residues 142–162 (AASFFSCLVMIAYGVSAFLSF) traverse the membrane as a helical segment. Topologically, residues 163–182 (QAWRGVGSNAATSQMAGGYA) are cytoplasmic.

This sequence belongs to the MAL family. In terms of assembly, forms oligomers. Post-translationally, phosphorylated.

The protein localises to the cell membrane. It is found in the myelin membrane. Its subcellular location is the apical cell membrane. In terms of biological role, main component of the myelin sheath that plays an important role in myelin membrane biogenesis and myelination. Plays an essential function in apical endocytosis. Regulates epithelial development through the regulation of apical endocytosis. Part of the intracellular machinery that mediates basolateral-to-apical transport of ICAM-1, an essential adhesion receptor in epithelial cells, from the subapical compartment in hepatic epithelial cells. This is Plasmolipin (PLLP) from Bos taurus (Bovine).